A 321-amino-acid chain; its full sequence is Lipoyl synthase (321 aa).

Cys68, Cys73, Cys79, Cys94, Cys98, Cys101, and Ser308 together coordinate [4Fe-4S] cluster. The Radical SAM core domain maps to 80 to 297; that stretch reads FNHGTATFMI…KEIALELGFT (218 aa).

It belongs to the radical SAM superfamily. Lipoyl synthase family. [4Fe-4S] cluster is required as a cofactor.

It is found in the cytoplasm. The catalysed reaction is [[Fe-S] cluster scaffold protein carrying a second [4Fe-4S](2+) cluster] + N(6)-octanoyl-L-lysyl-[protein] + 2 oxidized [2Fe-2S]-[ferredoxin] + 2 S-adenosyl-L-methionine + 4 H(+) = [[Fe-S] cluster scaffold protein] + N(6)-[(R)-dihydrolipoyl]-L-lysyl-[protein] + 4 Fe(3+) + 2 hydrogen sulfide + 2 5'-deoxyadenosine + 2 L-methionine + 2 reduced [2Fe-2S]-[ferredoxin]. Its pathway is protein modification; protein lipoylation via endogenous pathway; protein N(6)-(lipoyl)lysine from octanoyl-[acyl-carrier-protein]: step 2/2. Catalyzes the radical-mediated insertion of two sulfur atoms into the C-6 and C-8 positions of the octanoyl moiety bound to the lipoyl domains of lipoate-dependent enzymes, thereby converting the octanoylated domains into lipoylated derivatives. The sequence is that of Lipoyl synthase from Aliivibrio fischeri (strain MJ11) (Vibrio fischeri).